The chain runs to 295 residues: 4-diphosphocytidyl-2-C-methyl-D-erythritol kinase (295 aa).

Residue lysine 22 is part of the active site. Residue 106–116 (PAGGGFGGGSS) participates in ATP binding. The active site involves aspartate 148.

Belongs to the GHMP kinase family. IspE subfamily.

The catalysed reaction is 4-CDP-2-C-methyl-D-erythritol + ATP = 4-CDP-2-C-methyl-D-erythritol 2-phosphate + ADP + H(+). It functions in the pathway isoprenoid biosynthesis; isopentenyl diphosphate biosynthesis via DXP pathway; isopentenyl diphosphate from 1-deoxy-D-xylulose 5-phosphate: step 3/6. Functionally, catalyzes the phosphorylation of the position 2 hydroxy group of 4-diphosphocytidyl-2C-methyl-D-erythritol. The sequence is that of 4-diphosphocytidyl-2-C-methyl-D-erythritol kinase from Xanthomonas oryzae pv. oryzae (strain MAFF 311018).